Here is a 477-residue protein sequence, read N- to C-terminus: Ribulose bisphosphate carboxylase large chain (477 aa).

Residues Met1–Ser2 constitute a propeptide that is removed on maturation. Pro3 bears the N-acetylproline mark. An N6,N6,N6-trimethyllysine modification is found at Lys14. Substrate-binding residues include Asn123 and Thr173. The active-site Proton acceptor is the Lys175. Residue Lys177 coordinates substrate. Residues Lys201, Asp203, and Glu204 each coordinate Mg(2+). An N6-carboxylysine modification is found at Lys201. Catalysis depends on His294, which acts as the Proton acceptor. Substrate-binding residues include Arg295, His327, and Ser379.

It belongs to the RuBisCO large chain family. Type I subfamily. In terms of assembly, heterohexadecamer of 8 large chains and 8 small chains; disulfide-linked. The disulfide link is formed within the large subunit homodimers. Mg(2+) is required as a cofactor. Post-translationally, the disulfide bond which can form in the large chain dimeric partners within the hexadecamer appears to be associated with oxidative stress and protein turnover.

The protein resides in the plastid. The protein localises to the chloroplast. The catalysed reaction is 2 (2R)-3-phosphoglycerate + 2 H(+) = D-ribulose 1,5-bisphosphate + CO2 + H2O. It catalyses the reaction D-ribulose 1,5-bisphosphate + O2 = 2-phosphoglycolate + (2R)-3-phosphoglycerate + 2 H(+). Functionally, ruBisCO catalyzes two reactions: the carboxylation of D-ribulose 1,5-bisphosphate, the primary event in carbon dioxide fixation, as well as the oxidative fragmentation of the pentose substrate in the photorespiration process. Both reactions occur simultaneously and in competition at the same active site. The chain is Ribulose bisphosphate carboxylase large chain (rbcL) from Solanum tuberosum (Potato).